The following is a 215-amino-acid chain: Myelin protein zero-like protein 2 (215 aa).

A signal peptide spans methionine 1 to alanine 26. The region spanning valine 27–serine 141 is the Ig-like V-type domain. Residues valine 27 to leucine 154 are Extracellular-facing. N-linked (GlcNAc...) asparagine glycosylation is found at asparagine 39 and asparagine 118. A disulfide bond links cysteine 47 and cysteine 123. Residues alanine 155–phenylalanine 175 traverse the membrane as a helical segment. Topologically, residues glutamine 176–aspartate 215 are cytoplasmic. Residues alanine 187–leucine 201 show a composition bias toward basic and acidic residues. The interval alanine 187–aspartate 215 is disordered.

The protein belongs to the myelin P0 protein family. As to expression, widely expressed. Expressed in the cochlea, in Deiters' cells, possibly at contact sites with the basilar membrane. Expressed in both outer and inner auditory hair cells. In the stria vascularis, detected in the basal cell layer. Not detected in thymocytes, lymphocytes, macrophage or dendritic cells.

The protein resides in the membrane. Mediates homophilic cell-cell adhesion. The protein is Myelin protein zero-like protein 2 (Mpzl2) of Mus musculus (Mouse).